Consider the following 131-residue polypeptide: Large ribosomal subunit protein bL12 (131 aa).

This sequence belongs to the bacterial ribosomal protein bL12 family. As to quaternary structure, homodimer. Part of the ribosomal stalk of the 50S ribosomal subunit. Forms a multimeric L10(L12)X complex, where L10 forms an elongated spine to which 2 to 4 L12 dimers bind in a sequential fashion. Binds GTP-bound translation factors.

In terms of biological role, forms part of the ribosomal stalk which helps the ribosome interact with GTP-bound translation factors. Is thus essential for accurate translation. The chain is Large ribosomal subunit protein bL12 from Parasynechococcus marenigrum (strain WH8102).